A 313-amino-acid polypeptide reads, in one-letter code: Ribose-phosphate pyrophosphokinase (313 aa).

Residues 37-39 and 96-97 contribute to the ATP site; these read DGE and RQ. H131 and D170 together coordinate Mg(2+). Residue K193 is part of the active site. D-ribose 5-phosphate-binding positions include R195, D219, and 223-227; that span reads DTAGT.

The protein belongs to the ribose-phosphate pyrophosphokinase family. Class I subfamily. As to quaternary structure, homohexamer. Requires Mg(2+) as cofactor.

It is found in the cytoplasm. The enzyme catalyses D-ribose 5-phosphate + ATP = 5-phospho-alpha-D-ribose 1-diphosphate + AMP + H(+). The protein operates within metabolic intermediate biosynthesis; 5-phospho-alpha-D-ribose 1-diphosphate biosynthesis; 5-phospho-alpha-D-ribose 1-diphosphate from D-ribose 5-phosphate (route I): step 1/1. In terms of biological role, involved in the biosynthesis of the central metabolite phospho-alpha-D-ribosyl-1-pyrophosphate (PRPP) via the transfer of pyrophosphoryl group from ATP to 1-hydroxyl of ribose-5-phosphate (Rib-5-P). This chain is Ribose-phosphate pyrophosphokinase, found in Pseudomonas syringae pv. tomato (strain ATCC BAA-871 / DC3000).